A 42-amino-acid polypeptide reads, in one-letter code: Cytochrome b559 subunit beta (42 aa).

A helical transmembrane segment spans residues 17–33 (WLSIHALAVPTVFFLGA). Histidine 21 is a heme binding site.

It belongs to the PsbE/PsbF family. As to quaternary structure, heterodimer of an alpha subunit and a beta subunit. PSII is composed of 1 copy each of membrane proteins PsbA, PsbB, PsbC, PsbD, PsbE, PsbF, PsbH, PsbI, PsbJ, PsbK, PsbL, PsbM, PsbT, PsbX, PsbY, PsbZ, Psb30/Ycf12, at least 3 peripheral proteins of the oxygen-evolving complex and a large number of cofactors. It forms dimeric complexes. It depends on heme b as a cofactor.

Its subcellular location is the plastid. The protein resides in the chloroplast thylakoid membrane. Functionally, this b-type cytochrome is tightly associated with the reaction center of photosystem II (PSII). PSII is a light-driven water:plastoquinone oxidoreductase that uses light energy to abstract electrons from H(2)O, generating O(2) and a proton gradient subsequently used for ATP formation. It consists of a core antenna complex that captures photons, and an electron transfer chain that converts photonic excitation into a charge separation. The sequence is that of Cytochrome b559 subunit beta from Tupiella akineta (Green alga).